Consider the following 145-residue polypeptide: AP-2 complex subunit sigma (145 aa).

It belongs to the adaptor complexes small subunit family. In terms of assembly, adaptor protein complex 2 (AP-2) is a heterotetramer composed of two large adaptins (alpha-type subunit apl3 and beta-type subunit apl1), a medium chain (mu-type subunit apm4) and a small adaptin (sigma-type subunit aps2).

The protein resides in the cell membrane. It is found in the membrane. The protein localises to the coated pit. Its function is as follows. Component of the adaptor complexes which link clathrin to receptors in coated vesicles. Clathrin-associated protein complexes are believed to interact with the cytoplasmic tails of membrane proteins, leading to their selection and concentration. The chain is AP-2 complex subunit sigma (aps2) from Aspergillus fumigatus (strain ATCC MYA-4609 / CBS 101355 / FGSC A1100 / Af293) (Neosartorya fumigata).